Here is a 349-residue protein sequence, read N- to C-terminus: Protein RecA (349 aa).

Position 69–76 (69–76) interacts with ATP; it reads GPESSGKT.

It belongs to the RecA family.

The protein localises to the cytoplasm. Can catalyze the hydrolysis of ATP in the presence of single-stranded DNA, the ATP-dependent uptake of single-stranded DNA by duplex DNA, and the ATP-dependent hybridization of homologous single-stranded DNAs. It interacts with LexA causing its activation and leading to its autocatalytic cleavage. This Rippkaea orientalis (strain PCC 8801 / RF-1) (Cyanothece sp. (strain PCC 8801)) protein is Protein RecA.